Consider the following 718-residue polypeptide: Protein Hook homolog 1 (718 aa).

The 117-residue stretch at 8–124 (PLLCDSLILW…RLMQLILGCA (117 aa)) folds into the Calponin-homology (CH) domain. 2 coiled-coil regions span residues 164-428 (SASD…ELRY) and 473-652 (LLLQ…AKLR).

Belongs to the hook family. Interacts with microtubules.

It localises to the cytoplasm. It is found in the cytoskeleton. May function to promote vesicle trafficking and/or fusion. In Gallus gallus (Chicken), this protein is Protein Hook homolog 1 (HOOK1).